Here is a 217-residue protein sequence, read N- to C-terminus: Adenylate kinase (217 aa).

Gly-10–Thr-15 contacts ATP. Positions Ser-30–Val-59 are NMP. AMP contacts are provided by residues Thr-31, Arg-36, Glu-57–Val-59, Gly-85–Arg-88, and Gln-92. Positions Gly-126–Asp-163 are LID. Residue Arg-127 participates in ATP binding. 2 residues coordinate Zn(2+): Cys-130 and Cys-133. Thr-136–Tyr-137 contributes to the ATP binding site. Zn(2+) contacts are provided by Cys-150 and Cys-153. AMP-binding residues include Arg-160 and Arg-171. Lys-199 is a binding site for ATP.

The protein belongs to the adenylate kinase family. In terms of assembly, monomer.

The protein resides in the cytoplasm. The enzyme catalyses AMP + ATP = 2 ADP. Its pathway is purine metabolism; AMP biosynthesis via salvage pathway; AMP from ADP: step 1/1. Its function is as follows. Catalyzes the reversible transfer of the terminal phosphate group between ATP and AMP. Plays an important role in cellular energy homeostasis and in adenine nucleotide metabolism. This Bacillus pumilus (strain SAFR-032) protein is Adenylate kinase.